The chain runs to 168 residues: Ubiquitin-fold modifier-conjugating enzyme 1 (168 aa).

The active-site Glycyl thioester intermediate is C116.

It belongs to the ubiquitin-conjugating enzyme family. UFC1 subfamily.

Functionally, E2-like enzyme which forms an intermediate with UFM1 via a thioester linkage. In Trichoplax adhaerens (Trichoplax reptans), this protein is Ubiquitin-fold modifier-conjugating enzyme 1.